A 665-amino-acid chain; its full sequence is Intraflagellar transport protein 70B (665 aa).

TPR repeat units follow at residues 11–44 (DGEFTAVVYRLIRNARYAEAVQLLGGELQRSPRS), 45–78 (RAGLSLLGYCYYRLQEFALAAECYEQLGQLHPEL), 154–187 (TDGQINLGCLLYKEGQYEAACSKFFAALQASGYQ), 189–221 (DLSYNLALAYYSSRQYASALKHIAEIIERGIRQ), 393–424 (LTIQVQEARHNRDDEAIKKAVNEYDETMEKYI), 425–457 (PVLMAQAKIYWNLENYPMVEKIFRKSVEFCNDH), and 459–492 (VWKLNVAHVLFMQENKYKEAIGFYEPIVKKHYDN). Residues 130–154 (PGSRSLVEQLPSREGGEESGGENET) are disordered. Residues 508 to 535 (YIMTSQNEEAEELMRKIEKEEEQLSYDD) adopt a coiled-coil conformation. A TPR 8 repeat occupies 544–577 (CIVNLVIGTLYCAKGNYDFGISRVIKSLEPYNKK).

It belongs to the TTC30/dfy-1/fleer family. In terms of assembly, interacts with the IFT B complex components IFT27, IFT46, IFT74, IFT52, IFT57, IFT80, IFT81 and IFT88. Interacts with KIF17.

The protein resides in the cell projection. Its subcellular location is the cilium. Its function is as follows. Required for polyglutamylation of axonemal tubulin. Plays a role in anterograde intraflagellar transport (IFT), the process by which cilia precursors are transported from the base of the cilium to the site of their incorporation at the tip. The polypeptide is Intraflagellar transport protein 70B (Homo sapiens (Human)).